The sequence spans 171 residues: MPLLDSFTVDHTRMAAPAVRVAKTMKTPHGDTITVFDLRFCRPNLEVMPERGIHTLEHLFAGFMRDHLNGQGVEIIDISPMGCRTGFYMSLIGVPEEQRVADAWKAAMSDVLKVTDQRKIPELNEFQCGTYHMHSLEEAQEIAKHILDHDVVVNHNEELALPKEKLQELHI.

Fe cation is bound by residues histidine 54, histidine 58, and cysteine 128.

It belongs to the LuxS family. As to quaternary structure, homodimer. It depends on Fe cation as a cofactor.

The catalysed reaction is S-(5-deoxy-D-ribos-5-yl)-L-homocysteine = (S)-4,5-dihydroxypentane-2,3-dione + L-homocysteine. In terms of biological role, involved in the synthesis of autoinducer 2 (AI-2) which is secreted by bacteria and is used to communicate both the cell density and the metabolic potential of the environment. The regulation of gene expression in response to changes in cell density is called quorum sensing. Catalyzes the transformation of S-ribosylhomocysteine (RHC) to homocysteine (HC) and 4,5-dihydroxy-2,3-pentadione (DPD). The chain is S-ribosylhomocysteine lyase from Serratia proteamaculans (strain 568).